The following is a 116-amino-acid chain: Small ribosomal subunit protein uS8c (116 aa).

Belongs to the universal ribosomal protein uS8 family. As to quaternary structure, part of the 30S ribosomal subunit.

The protein resides in the plastid. It localises to the chloroplast. Its function is as follows. One of the primary rRNA binding proteins, it binds directly to 16S rRNA central domain where it helps coordinate assembly of the platform of the 30S subunit. The sequence is that of Small ribosomal subunit protein uS8c (rps8) from Musa acuminata (Banana).